The primary structure comprises 216 residues: Large ribosomal subunit protein uL3 (216 aa).

Glutamine 157 is modified (N5-methylglutamine).

It belongs to the universal ribosomal protein uL3 family. In terms of assembly, part of the 50S ribosomal subunit. Forms a cluster with proteins L14 and L19. Methylated by PrmB.

In terms of biological role, one of the primary rRNA binding proteins, it binds directly near the 3'-end of the 23S rRNA, where it nucleates assembly of the 50S subunit. This Stenotrophomonas maltophilia (strain R551-3) protein is Large ribosomal subunit protein uL3.